Here is a 147-residue protein sequence, read N- to C-terminus: Large ribosomal subunit protein uL11 (147 aa).

It belongs to the universal ribosomal protein uL11 family. In terms of assembly, part of the ribosomal stalk of the 50S ribosomal subunit. Interacts with L10 and the large rRNA to form the base of the stalk. L10 forms an elongated spine to which L12 dimers bind in a sequential fashion forming a multimeric L10(L12)X complex. In terms of processing, one or more lysine residues are methylated.

Forms part of the ribosomal stalk which helps the ribosome interact with GTP-bound translation factors. The polypeptide is Large ribosomal subunit protein uL11 (Sorangium cellulosum (strain So ce56) (Polyangium cellulosum (strain So ce56))).